Consider the following 252-residue polypeptide: Cytochrome b6-f complex iron-sulfur subunit, chloroplastic (252 aa).

The helical transmembrane segment at 94–114 (LVLAAVAPVVASAGGCYLYYF) threads the bilayer. The Rieske domain occupies 141-235 (WFKSHKKNAR…VEDDNGKILL (95 aa)). 4 residues coordinate [2Fe-2S] cluster: cysteine 181, histidine 183, cysteine 199, and histidine 202. A disulfide bond links cysteine 186 and cysteine 201.

The protein belongs to the Rieske iron-sulfur protein family. As to quaternary structure, the 4 large subunits of the cytochrome b6-f complex are cytochrome b6, subunit IV (17 kDa polypeptide, petD), cytochrome f and the Rieske protein, while the 4 small subunits are petG, petL, petM and petN. The complex functions as a dimer. [2Fe-2S] cluster is required as a cofactor.

It localises to the plastid. It is found in the chloroplast thylakoid membrane. It carries out the reaction 2 oxidized [plastocyanin] + a plastoquinol + 2 H(+)(in) = 2 reduced [plastocyanin] + a plastoquinone + 4 H(+)(out). Functionally, component of the cytochrome b6-f complex, which mediates electron transfer between photosystem II (PSII) and photosystem I (PSI), cyclic electron flow around PSI, and state transitions. The polypeptide is Cytochrome b6-f complex iron-sulfur subunit, chloroplastic (petC) (Bigelowiella natans (Pedinomonas minutissima)).